Consider the following 644-residue polypeptide: Interleukin-23 receptor (644 aa).

The signal sequence occupies residues Met-1 to Gly-23. The Extracellular segment spans residues Gly-24–Gly-374. N-linked (GlcNAc...) asparagine glycans are attached at residues Asn-47, Asn-130, and Asn-232. 2 Fibronectin type-III domains span residues Ala-127–Ile-217 and Ile-219–Glu-318. The helical transmembrane segment at Leu-375–Phe-395 threads the bilayer. At Asn-396–Lys-644 the chain is on the cytoplasmic side.

This sequence belongs to the type I cytokine receptor family. Type 2 subfamily. In terms of assembly, heterodimer with IL12RB1. In presence of IL23, the heterodimer forms the IL23 receptor. Interacts with JAK2 and in presence of IL23 with STAT3. In terms of processing, phosphorylated in response to IL23. Expressed by Th1, Th2 and dendritic cells.

It is found in the cell membrane. In terms of biological role, associates with IL12RB1 to form the interleukin-23 receptor. Binds IL23 and mediates T-cells, NK cells and possibly certain macrophage/myeloid cells stimulation probably through activation of the Jak-Stat signaling cascade. IL23 functions in innate and adaptive immunity and may participate in acute response to infection in peripheral tissues. IL23 may be responsible for autoimmune inflammatory diseases and be important for tumorigenesis. The chain is Interleukin-23 receptor (Il23r) from Mus musculus (Mouse).